The primary structure comprises 40 residues: Photosystem II reaction center protein J (40 aa).

The helical transmembrane segment at Ile8 to Phe28 threads the bilayer.

The protein belongs to the PsbJ family. In terms of assembly, PSII is composed of 1 copy each of membrane proteins PsbA, PsbB, PsbC, PsbD, PsbE, PsbF, PsbH, PsbI, PsbJ, PsbK, PsbL, PsbM, PsbT, PsbX, PsbY, PsbZ, Psb30/Ycf12, at least 3 peripheral proteins of the oxygen-evolving complex and a large number of cofactors. It forms dimeric complexes.

It localises to the plastid membrane. One of the components of the core complex of photosystem II (PSII). PSII is a light-driven water:plastoquinone oxidoreductase that uses light energy to abstract electrons from H(2)O, generating O(2) and a proton gradient subsequently used for ATP formation. It consists of a core antenna complex that captures photons, and an electron transfer chain that converts photonic excitation into a charge separation. The chain is Photosystem II reaction center protein J from Cuscuta gronovii (Common dodder).